The following is a 468-amino-acid chain: 3-isopropylmalate dehydratase large subunit (468 aa).

[4Fe-4S] cluster contacts are provided by cysteine 349, cysteine 409, and cysteine 412.

It belongs to the aconitase/IPM isomerase family. LeuC type 1 subfamily. As to quaternary structure, heterodimer of LeuC and LeuD. It depends on [4Fe-4S] cluster as a cofactor.

It catalyses the reaction (2R,3S)-3-isopropylmalate = (2S)-2-isopropylmalate. It participates in amino-acid biosynthesis; L-leucine biosynthesis; L-leucine from 3-methyl-2-oxobutanoate: step 2/4. Its function is as follows. Catalyzes the isomerization between 2-isopropylmalate and 3-isopropylmalate, via the formation of 2-isopropylmaleate. The chain is 3-isopropylmalate dehydratase large subunit from Roseobacter denitrificans (strain ATCC 33942 / OCh 114) (Erythrobacter sp. (strain OCh 114)).